Reading from the N-terminus, the 159-residue chain is Small ribosomal subunit protein uS7 (159 aa).

This sequence belongs to the universal ribosomal protein uS7 family. Part of the 30S ribosomal subunit. Contacts proteins S9 and S11.

Functionally, one of the primary rRNA binding proteins, it binds directly to 16S rRNA where it nucleates assembly of the head domain of the 30S subunit. Is located at the subunit interface close to the decoding center, probably blocks exit of the E-site tRNA. The polypeptide is Small ribosomal subunit protein uS7 (Wolbachia sp. subsp. Brugia malayi (strain TRS)).